Consider the following 234-residue polypeptide: GTP cyclohydrolase 1 type 2 homolog (234 aa).

A divalent metal cation is bound by residues His61, His62, Asp80, His195, and Glu199.

This sequence belongs to the GTP cyclohydrolase I type 2/NIF3 family. Homohexamer.

The polypeptide is GTP cyclohydrolase 1 type 2 homolog (Methanothermobacter thermautotrophicus (strain ATCC 29096 / DSM 1053 / JCM 10044 / NBRC 100330 / Delta H) (Methanobacterium thermoautotrophicum)).